The sequence spans 321 residues: Glutaminase (321 aa).

The substrate site is built by Ser69, Asn120, Glu165, Asn172, Tyr196, Tyr248, and Val266.

This sequence belongs to the glutaminase family. As to quaternary structure, homotetramer.

It carries out the reaction L-glutamine + H2O = L-glutamate + NH4(+). This chain is Glutaminase, found in Bacteroides fragilis (strain YCH46).